A 563-amino-acid chain; its full sequence is Arginine--tRNA ligase (563 aa).

Residues 122-132 (PNIAKPMSMGH) carry the 'HIGH' region motif.

This sequence belongs to the class-I aminoacyl-tRNA synthetase family. As to quaternary structure, monomer.

The protein resides in the cytoplasm. The enzyme catalyses tRNA(Arg) + L-arginine + ATP = L-arginyl-tRNA(Arg) + AMP + diphosphate. The chain is Arginine--tRNA ligase from Levilactobacillus brevis (strain ATCC 367 / BCRC 12310 / CIP 105137 / JCM 1170 / LMG 11437 / NCIMB 947 / NCTC 947) (Lactobacillus brevis).